The chain runs to 227 residues: Translation initiation factor 6 (227 aa).

It belongs to the eIF-6 family.

Its function is as follows. Binds to the 50S ribosomal subunit and prevents its association with the 30S ribosomal subunit to form the 70S initiation complex. In Pyrococcus horikoshii (strain ATCC 700860 / DSM 12428 / JCM 9974 / NBRC 100139 / OT-3), this protein is Translation initiation factor 6.